The following is a 1010-amino-acid chain: PHD finger protein 20 (1010 aa).

Tudor domains follow at residues 4–69 and 83–147; these read HPPN…RPLE and GSSE…GNAR. Disordered regions lie at residues 142–373 and 483–609; these read IVGN…EGQL and EKSP…GKLK. Residues 147–246 show a composition bias toward basic and acidic residues; that stretch reads RPKETDHKSL…VEKKPEKDLV (100 aa). S159 is modified (phosphoserine). Residues 257–269 constitute a DNA-binding region (a.T hook); sequence KRKRGRPPSITPT. A compositionally biased stretch (polar residues) spans 267 to 280; sequence TPTAVDSNSQTLQP. Basic and acidic residues-rich tracts occupy residues 292–325, 483–493, and 525–541; these read KRSD…DLSR, EKSPEPEEGPG, and AKEK…ELVR. The C2H2-type zinc finger occupies 455 to 485; the sequence is FRCKVLDCLKFFRKAKLLHYHMKYFHGMEKS. Over residues 542–554 the composition is skewed to basic residues; that stretch reads VKPKKKKKKKKKT. A PHD-type zinc finger spans residues 657-703; the sequence is RCICEVQEENDFMIQCEECQCWQHGVCMGLLEENVPEKYTCYVCQDP. Residues 804–827 are disordered; the sequence is RSEESPSYRTLNGAVEKPSPLPRS. N6-acetyllysine is present on K841. Residues S876 and S878 each carry the phosphoserine modification. Residues 877 to 902 form a disordered region; sequence LSPRLGWPIDQDRSRGDIDPKPSSPK. Residues 886–902 are compositionally biased toward basic and acidic residues; that stretch reads DQDRSRGDIDPKPSSPK.

In terms of assembly, homodimer; disulfide-linked. Component of some MLL1/MLL complex, at least composed of the core components KMT2A/MLL1, ASH2L, HCFC1, WDR5 and RBBP5, as well as the facultative components BACC1, CHD8, E2F6, HSP70, INO80C, KANSL1, LAS1L, MAX, MCRS1, MGA, MYST1/MOF, PELP1, PHF20, PRP31, RING2, RUVB1/TIP49A, RUVB2/TIP49B, SENP3, TAF1, TAF4, TAF6, TAF7, TAF9 and TEX10. Component of the NSL complex at least composed of MOF/KAT8, KANSL1, KANSL2, KANSL3, MCRS1, PHF20, OGT1/OGT, WDR5 and HCFC1. Post-translationally, ubiquitinated by TRIM26; leading to proteasomal degradation.

Its subcellular location is the nucleus. Functionally, contributes to methyllysine-dependent p53/TP53 stabilization and up-regulation after DNA damage. Methyllysine-binding protein, component of the MOF histone acetyltransferase protein complex. Not required for maintaining the global histone H4 'Lys-16' acetylation (H4K16ac) levels or locus specific histone acetylation, but instead works downstream in transcriptional regulation of MOF target genes. As part of the NSL complex it may be involved in acetylation of nucleosomal histone H4 on several lysine residues. In Mus musculus (Mouse), this protein is PHD finger protein 20 (Phf20).